Consider the following 303-residue polypeptide: MEPTTEIQATEDLTLSGDHAAASADSLVVDNANDNAGQEEGFEIVLKDDETAPKQDPAKNAEFARRRIERKRQRELEQQMEAVKRGELPESLRVNPDLPPQPDINAYLSEEGLAKYDYDNSRALAAFNAANTEWLMKAQDARSNAVAEQGRKTQEFTQQSAQYVEAARKHYDAAEKLNIPDYQEKEDAFMQLVPPAVGADIMRLFPEKSAALMYHLGANPEKARQLLAMDGQSALIELTRLSERLTLKPRGKQISSAPPADQPITGDVSAANKDAIRKQMDAAASKGDVETYRKLKAKLKGIR.

The segment at 1-74 is post-transcriptional autoregulatory domain; the sequence is MEPTTEIQAT…RRRIERKRQR (74 aa). Residues 275 to 303 are interaction with the capsid protein; the sequence is AIRKQMDAAASKGDVETYRKLKAKLKGIR.

Homodimer. Homotetramer. Interacts with the portal protein; this interaction initiates procapsid assembly, thereby ensuring incorporation of only one portal ring per capsid. Interacts (via C-terminus) with the capsid protein; this interaction allow to form the procapsid, in which the scaffolding protein forms an internal shell in the icosahedrally arranged capsid protein subunits.

Functionally, required for procapsid assembly. The interior of the prohead is filled with the scaffolding protein. The scaffolding protein is lost from the structure during packaging. Scaffolding protein exit is followed by the expansion of the procapsid into a mature capsid. This chain is Scaffolding protein (8), found in Salmonella typhimurium (Bacteriophage P22).